A 204-amino-acid chain; its full sequence is LexA repressor (204 aa).

Residues 28 to 48 (RAEIAQELGFKSPNAAEEHLK) constitute a DNA-binding region (H-T-H motif). Residues Ser125 and Lys162 each act as for autocatalytic cleavage activity in the active site.

The protein belongs to the peptidase S24 family. Homodimer.

The enzyme catalyses Hydrolysis of Ala-|-Gly bond in repressor LexA.. Its function is as follows. Represses a number of genes involved in the response to DNA damage (SOS response), including recA and lexA. In the presence of single-stranded DNA, RecA interacts with LexA causing an autocatalytic cleavage which disrupts the DNA-binding part of LexA, leading to derepression of the SOS regulon and eventually DNA repair. This chain is LexA repressor, found in Ectopseudomonas mendocina (strain ymp) (Pseudomonas mendocina).